A 426-amino-acid chain; its full sequence is Serine--tRNA ligase (426 aa).

229–231 (TAE) contributes to the L-serine binding site. 260-262 (RSE) contacts ATP. Residue glutamate 283 coordinates L-serine. 347–350 (EIAS) serves as a coordination point for ATP. Serine 383 contacts L-serine.

The protein belongs to the class-II aminoacyl-tRNA synthetase family. Type-1 seryl-tRNA synthetase subfamily. As to quaternary structure, homodimer. The tRNA molecule binds across the dimer.

It is found in the cytoplasm. The catalysed reaction is tRNA(Ser) + L-serine + ATP = L-seryl-tRNA(Ser) + AMP + diphosphate + H(+). It catalyses the reaction tRNA(Sec) + L-serine + ATP = L-seryl-tRNA(Sec) + AMP + diphosphate + H(+). It functions in the pathway aminoacyl-tRNA biosynthesis; selenocysteinyl-tRNA(Sec) biosynthesis; L-seryl-tRNA(Sec) from L-serine and tRNA(Sec): step 1/1. In terms of biological role, catalyzes the attachment of serine to tRNA(Ser). Is also able to aminoacylate tRNA(Sec) with serine, to form the misacylated tRNA L-seryl-tRNA(Sec), which will be further converted into selenocysteinyl-tRNA(Sec). This chain is Serine--tRNA ligase, found in Rickettsia bellii (strain OSU 85-389).